A 475-amino-acid polypeptide reads, in one-letter code: Ribulose bisphosphate carboxylase large chain (475 aa).

A propeptide spanning residues 1–2 (MS) is cleaved from the precursor. P3 is modified (N-acetylproline). K14 bears the N6,N6,N6-trimethyllysine mark. Substrate is bound by residues N123 and T173. K175 acts as the Proton acceptor in catalysis. K177 contacts substrate. Residues K201, D203, and E204 each coordinate Mg(2+). Position 201 is an N6-carboxylysine (K201). Residue H294 is the Proton acceptor of the active site. 3 residues coordinate substrate: R295, H327, and S379.

The protein belongs to the RuBisCO large chain family. Type I subfamily. As to quaternary structure, heterohexadecamer of 8 large chains and 8 small chains; disulfide-linked. The disulfide link is formed within the large subunit homodimers. Mg(2+) is required as a cofactor. The disulfide bond which can form in the large chain dimeric partners within the hexadecamer appears to be associated with oxidative stress and protein turnover.

The protein localises to the plastid. It is found in the chloroplast. The enzyme catalyses 2 (2R)-3-phosphoglycerate + 2 H(+) = D-ribulose 1,5-bisphosphate + CO2 + H2O. It catalyses the reaction D-ribulose 1,5-bisphosphate + O2 = 2-phosphoglycolate + (2R)-3-phosphoglycerate + 2 H(+). Functionally, ruBisCO catalyzes two reactions: the carboxylation of D-ribulose 1,5-bisphosphate, the primary event in carbon dioxide fixation, as well as the oxidative fragmentation of the pentose substrate in the photorespiration process. Both reactions occur simultaneously and in competition at the same active site. In Larix occidentalis (Western larch), this protein is Ribulose bisphosphate carboxylase large chain.